The following is a 510-amino-acid chain: Beta-galactosidase (510 aa).

The active-site Proton donor is Glu-210. The active-site Nucleophile is Glu-414.

This sequence belongs to the glycosyl hydrolase 1 family.

The enzyme catalyses Hydrolysis of terminal non-reducing beta-D-galactose residues in beta-D-galactosides.. The chain is Beta-galactosidase from Pyrococcus woesei.